Consider the following 547-residue polypeptide: Threonine synthase (547 aa).

Residue Lys117 is modified to N6-(pyridoxal phosphate)lysine. Pyridoxal 5'-phosphate-binding residues include Gly272, Asn273, Phe274, Asp276, and Thr471.

This sequence belongs to the threonine synthase family. It depends on pyridoxal 5'-phosphate as a cofactor.

It catalyses the reaction O-phospho-L-homoserine + H2O = L-threonine + phosphate. It functions in the pathway amino-acid biosynthesis; L-threonine biosynthesis; L-threonine from L-aspartate: step 5/5. In terms of biological role, catalyzes the gamma-elimination of phosphate from L-phosphohomoserine and the beta-addition of water to produce L-threonine. The protein is Threonine synthase of Cryptococcus neoformans var. grubii serotype A (strain H99 / ATCC 208821 / CBS 10515 / FGSC 9487) (Filobasidiella neoformans var. grubii).